Here is a 557-residue protein sequence, read N- to C-terminus: Formate--tetrahydrofolate ligase (557 aa).

Residue 65–72 (TPAGEGKT) participates in ATP binding.

Belongs to the formate--tetrahydrofolate ligase family.

It catalyses the reaction (6S)-5,6,7,8-tetrahydrofolate + formate + ATP = (6R)-10-formyltetrahydrofolate + ADP + phosphate. It functions in the pathway one-carbon metabolism; tetrahydrofolate interconversion. The sequence is that of Formate--tetrahydrofolate ligase from Methylorubrum extorquens (strain PA1) (Methylobacterium extorquens).